A 261-amino-acid chain; its full sequence is Uridine-cytidine kinase 2 (261 aa).

Polar residues predominate over residues 1-16 (MAGDSEQTLQNHQQPN). The interval 1–24 (MAGDSEQTLQNHQQPNGGEPFLIG) is disordered. Residue Ala2 is modified to N-acetylalanine. Position 27–35 (27–35 (GGTASGKSS)) interacts with ATP. 6 residues coordinate substrate: Asp84, Tyr112, His117, Arg166, Arg176, and Gln184. Residue Asp213 coordinates ATP. Residues 236–261 (RQTNGCLNGYTPSRKRQASESSSRPH) are disordered. Phosphoserine is present on Ser254.

Belongs to the uridine kinase family. As to quaternary structure, homotetramer. In terms of tissue distribution, according to PubMed:8812458; testis-specific. According to PubMed:11306702, placenta-specific.

The enzyme catalyses uridine + ATP = UMP + ADP + H(+). The catalysed reaction is cytidine + ATP = CMP + ADP + H(+). It participates in pyrimidine metabolism; CTP biosynthesis via salvage pathway; CTP from cytidine: step 1/3. The protein operates within pyrimidine metabolism; UMP biosynthesis via salvage pathway; UMP from uridine: step 1/1. In terms of biological role, phosphorylates uridine and cytidine to uridine monophosphate and cytidine monophosphate. Does not phosphorylate deoxyribonucleosides or purine ribonucleosides. Can use ATP or GTP as a phosphate donor. Can also phosphorylate cytidine and uridine nucleoside analogs such as 6-azauridine, 5-fluorouridine, 4-thiouridine, 5-bromouridine, N(4)-acetylcytidine, N(4)-benzoylcytidine, 5-fluorocytidine, 2-thiocytidine, 5-methylcytidine, and N(4)-anisoylcytidine. This Homo sapiens (Human) protein is Uridine-cytidine kinase 2 (UCK2).